A 380-amino-acid polypeptide reads, in one-letter code: Lipid-A-disaccharide synthase (380 aa).

It belongs to the LpxB family.

It carries out the reaction a lipid X + a UDP-2-N,3-O-bis[(3R)-3-hydroxyacyl]-alpha-D-glucosamine = a lipid A disaccharide + UDP + H(+). It participates in bacterial outer membrane biogenesis; LPS lipid A biosynthesis. Its function is as follows. Condensation of UDP-2,3-diacylglucosamine and 2,3-diacylglucosamine-1-phosphate to form lipid A disaccharide, a precursor of lipid A, a phosphorylated glycolipid that anchors the lipopolysaccharide to the outer membrane of the cell. This Francisella philomiragia subsp. philomiragia (strain ATCC 25017 / CCUG 19701 / FSC 153 / O#319-036) protein is Lipid-A-disaccharide synthase.